The sequence spans 515 residues: 1-pyrroline-5-carboxylate dehydrogenase (515 aa).

Residues glutamate 286 and cysteine 320 contribute to the active site.

It belongs to the aldehyde dehydrogenase family. RocA subfamily.

It carries out the reaction L-glutamate 5-semialdehyde + NAD(+) + H2O = L-glutamate + NADH + 2 H(+). The protein operates within amino-acid degradation; L-proline degradation into L-glutamate; L-glutamate from L-proline: step 2/2. The polypeptide is 1-pyrroline-5-carboxylate dehydrogenase (Bacillus pumilus (strain SAFR-032)).